We begin with the raw amino-acid sequence, 147 residues long: Large ribosomal subunit protein uL13 (147 aa).

The protein belongs to the universal ribosomal protein uL13 family. Part of the 50S ribosomal subunit.

In terms of biological role, this protein is one of the early assembly proteins of the 50S ribosomal subunit, although it is not seen to bind rRNA by itself. It is important during the early stages of 50S assembly. The polypeptide is Large ribosomal subunit protein uL13 (Salinispora arenicola (strain CNS-205)).